A 237-amino-acid polypeptide reads, in one-letter code: Sugar fermentation stimulation protein homolog (237 aa).

The protein belongs to the SfsA family.

The polypeptide is Sugar fermentation stimulation protein homolog (Methylobacterium radiotolerans (strain ATCC 27329 / DSM 1819 / JCM 2831 / NBRC 15690 / NCIMB 10815 / 0-1)).